A 168-amino-acid chain; its full sequence is Acetone carboxylase gamma subunit (168 aa).

Heterohexamer of two alpha, two beta and two gamma subunits. Fe cation is required as a cofactor. Mg(2+) serves as cofactor. It depends on Zn(2+) as a cofactor.

It carries out the reaction acetone + hydrogencarbonate + 2 ATP + 3 H2O = acetoacetate + 2 AMP + 4 phosphate + 4 H(+). Catalyzes the carboxylation of acetone to form acetoacetate. Has a reduced activity on butanone, and no activity on 2-pentatone, 3-pentatone, 2-hexanone, chloroacetone, pyruvate, phosphoenolpyruvate, acetaldehyde, propionaldehyde and propylene oxide. This is Acetone carboxylase gamma subunit from Xanthobacter autotrophicus (strain ATCC BAA-1158 / Py2).